Here is a 554-residue protein sequence, read N- to C-terminus: Alpha-taxilin (554 aa).

The segment at 1 to 66 is disordered; the sequence is MKNQDKKNGP…ARAKAAQPGA (66 aa). Ser71 is subject to Phosphoserine. Residues 85–166 form a disordered region; that stretch reads YCVDNNQGGP…RRPQEKKKAK (82 aa). Over residues 91 to 103 the composition is skewed to low complexity; sequence QGGPAEEGAQGEP. The span at 143–158 shows a compositional bias: basic and acidic residues; the sequence is EEIRASDEVGDRDHRR. Residues 186–491 adopt a coiled-coil conformation; it reads EEKLAALCKK…NKRVQDLTAG (306 aa). The disordered stretch occupies residues 492–554; the sequence is GITDIGSERR…GPGEPTPATA (63 aa). Phosphoserine is present on residues Ser515 and Ser523.

The protein belongs to the taxilin family. In terms of assembly, binds to the C-terminal coiled coil region of syntaxin family members STX1A, STX3A and STX4A, but not when these proteins are complexed with SNAP25, VAMP2 or STXBP1, suggesting that it interacts with syntaxins that do not form the SNARE complex.

In terms of biological role, may be involved in intracellular vesicle traffic and potentially in calcium-dependent exocytosis in neuroendocrine cells. In Mus musculus (Mouse), this protein is Alpha-taxilin (Txlna).